Consider the following 142-residue polypeptide: MADQLTEEQIAEFKEAFSLFDKDGDGTITTKELGTVMRSLGQNPTEAELQDMINEVDADGNGTIDFPEFLTMMARKMKDTDSEEEIREAFRVFDKDGNGYISAAELRHVMTNLGEKLTDEEVDEMIREADIDGDGQVNYEEF.

A2 carries the post-translational modification N-acetylalanine. EF-hand domains follow at residues E8–N43, P44–D79, D81–K116, and L117–F142. Ca(2+)-binding residues include D21, D23, D25, T27, E32, D57, D59, N61, T63, E68, D94, D96, N98, Y100, and E105. The residue at position 116 (K116) is an N6,N6,N6-trimethyllysine. The Ca(2+) site is built by D130, D132, D134, Q136, and E141.

This sequence belongs to the calmodulin family.

Its function is as follows. Calmodulin mediates the control of a large number of enzymes, ion channels and other proteins by Ca(2+). Among the enzymes to be stimulated by the calmodulin-Ca(2+) complex are a number of protein kinases and phosphatases. This chain is Calmodulin-alpha, found in Arbacia punctulata (Punctuate sea urchin).